The primary structure comprises 780 residues: Ribonucleoside-diphosphate reductase large subunit (780 aa).

Substrate contacts are provided by residues threonine 177, serine 192–cysteine 193, glycine 223, asparagine 393–glutamate 397, and proline 595–serine 599. Cysteine 193 and cysteine 409 are oxidised to a cystine. The active-site Proton acceptor is the asparagine 393. The active-site Cysteine radical intermediate is the cysteine 395. Glutamate 397 (proton acceptor) is an active-site residue.

Belongs to the ribonucleoside diphosphate reductase large chain family. In terms of assembly, heterotetramer composed of a homodimer of the large subunit (R1) and a homodimer of the small subunit (R2). Larger multisubunit protein complex are also active, composed of (R1)n(R2)n.

The catalysed reaction is a 2'-deoxyribonucleoside 5'-diphosphate + [thioredoxin]-disulfide + H2O = a ribonucleoside 5'-diphosphate + [thioredoxin]-dithiol. Ribonucleoside-diphosphate reductase holoenzyme provides the precursors necessary for viral DNA synthesis. Allows virus growth in non-dividing cells, as well as reactivation from latency in infected hosts. Catalyzes the biosynthesis of deoxyribonucleotides from the corresponding ribonucleotides. In Connochaetes taurinus (Blue wildebeest), this protein is Ribonucleoside-diphosphate reductase large subunit.